The chain runs to 139 residues: uncharacterized protein (139 aa).

To E.coli YebE.

This is an uncharacterized protein from Yersinia enterocolitica.